The chain runs to 171 residues: 16S rRNA aminocarboxypropyltransferase (171 aa).

The S-adenosyl-L-methionine site is built by threonine 17, leucine 67, leucine 90, and threonine 109.

This sequence belongs to the TDD superfamily. TSR3 family.

The protein localises to the cytoplasm. The enzyme catalyses an N(1)-methylpseudouridine in rRNA + S-adenosyl-L-methionine = N(1)-methyl-N(3)-[(3S)-3-amino-3-carboxypropyl]pseudouridine in rRNA + S-methyl-5'-thioadenosine + H(+). In terms of biological role, aminocarboxypropyltransferase that catalyzes the aminocarboxypropyl transfer on pseudouridine corresponding to position 914 in M.jannaschii 16S rRNA. It constitutes the last step in biosynthesis of the hypermodified N1-methyl-N3-(3-amino-3-carboxypropyl) pseudouridine (m1acp3-Psi). This Methanobrevibacter smithii (strain ATCC 35061 / DSM 861 / OCM 144 / PS) protein is 16S rRNA aminocarboxypropyltransferase.